The chain runs to 658 residues: Carnitine O-palmitoyltransferase 2, mitochondrial (658 aa).

The N-terminal 25 residues, 1–25 (MMPRLLFRAWPRCPSLVLGAPSRPL), are a transit peptide targeting the mitochondrion. The Mitochondrial matrix portion of the chain corresponds to 26–178 (SAVSGPDDYL…GLLEPEVFHL (153 aa)). Residues Lys-69 and Lys-85 each carry the N6-succinyllysine modification. The note=Mitochondrial inner membrane intramembrane region spans 179 to 208 (NPSKSDTDAFKRLIRFVPPSLSWYGAYLVN). Residues 209–658 (AYPLDMSQYF…DALEGKAIKT (450 aa)) lie on the Mitochondrial matrix side of the membrane. At Lys-239 the chain carries N6-acetyllysine; alternate. Lys-239 carries the post-translational modification N6-succinyllysine; alternate. Lys-305 is subject to N6-acetyllysine. The Proton acceptor role is filled by His-372. 2 positions are modified to N6-succinyllysine: Lys-424 and Lys-439. 452–464 (GKEFLKKKQLSPD) lines the CoA pocket. Tyr-486, Ser-488, and Thr-499 together coordinate (R)-carnitine. An N6-acetyllysine; alternate mark is found at Lys-510 and Lys-544. Residues Lys-510 and Lys-544 each carry the N6-succinyllysine; alternate modification.

This sequence belongs to the carnitine/choline acetyltransferase family.

The protein resides in the mitochondrion inner membrane. The enzyme catalyses (R)-carnitine + hexadecanoyl-CoA = O-hexadecanoyl-(R)-carnitine + CoA. The catalysed reaction is octanoyl-CoA + (R)-carnitine = O-octanoyl-(R)-carnitine + CoA. It catalyses the reaction decanoyl-CoA + (R)-carnitine = O-decanoyl-(R)-carnitine + CoA. It carries out the reaction dodecanoyl-CoA + (R)-carnitine = O-dodecanoyl-R-carnitine + CoA. The enzyme catalyses tetradecanoyl-CoA + (R)-carnitine = O-tetradecanoyl-(R)-carnitine + CoA. The catalysed reaction is (R)-carnitine + octadecanoyl-CoA = O-octadecanoyl-(R)-carnitine + CoA. It catalyses the reaction eicosanoyl-CoA + (R)-carnitine = O-eicosanoyl-(R)-carnitine + CoA. It carries out the reaction (9Z)-tetradecenoyl-CoA + (R)-carnitine = O-(9Z)-tetradecenoyl-(R)-carnitine + CoA. The enzyme catalyses (5Z)-tetradecenoyl-CoA + (R)-carnitine = O-(5Z)-tetradecenoyl-(R)-carnitine + CoA. The catalysed reaction is (R)-carnitine + (9Z)-octadecenoyl-CoA = O-(9Z)-octadecenoyl-(R)-carnitine + CoA. It catalyses the reaction 4,8-dimethylnonanoyl-CoA + (R)-carnitine = O-4,8-dimethylnonanoyl-(R)-carnitine + CoA. Its pathway is lipid metabolism; fatty acid beta-oxidation. Its function is as follows. Involved in the intramitochondrial synthesis of acylcarnitines from accumulated acyl-CoA metabolites. Reconverts acylcarnitines back into the respective acyl-CoA esters that can then undergo beta-oxidation, an essential step for the mitochondrial uptake of long-chain fatty acids and their subsequent beta-oxidation in the mitochondrion. Active with medium (C8-C12) and long-chain (C14-C18) acyl-CoA esters. The sequence is that of Carnitine O-palmitoyltransferase 2, mitochondrial from Rattus norvegicus (Rat).